The following is a 131-amino-acid chain: Large ribosomal subunit protein bL12 (131 aa).

The protein belongs to the bacterial ribosomal protein bL12 family. As to quaternary structure, homodimer. Part of the ribosomal stalk of the 50S ribosomal subunit. Forms a multimeric L10(L12)X complex, where L10 forms an elongated spine to which 2 to 4 L12 dimers bind in a sequential fashion. Binds GTP-bound translation factors.

Functionally, forms part of the ribosomal stalk which helps the ribosome interact with GTP-bound translation factors. Is thus essential for accurate translation. In Prochlorococcus marinus (strain MIT 9313), this protein is Large ribosomal subunit protein bL12.